The following is a 272-amino-acid chain: tRNA pseudouridine synthase B (272 aa).

The Nucleophile role is filled by Asp-38.

It belongs to the pseudouridine synthase TruB family. Type 1 subfamily.

It carries out the reaction uridine(55) in tRNA = pseudouridine(55) in tRNA. In terms of biological role, responsible for synthesis of pseudouridine from uracil-55 in the psi GC loop of transfer RNAs. The protein is tRNA pseudouridine synthase B of Campylobacter jejuni subsp. jejuni serotype O:6 (strain 81116 / NCTC 11828).